A 146-amino-acid chain; its full sequence is Hemoglobin subunit beta (146 aa).

N-acetylvaline is present on V1. The Globin domain occupies 2–146; it reads DLTAEEKAAV…VANALAHKYH (145 aa). The residue at position 44 (S44) is a Phosphoserine. K59 carries the N6-acetyllysine modification. H63 serves as a coordination point for heme b. K82 is modified (N6-acetyllysine). H92 lines the heme b pocket. The residue at position 93 (C93) is an S-nitrosocysteine. K144 is modified (N6-acetyllysine).

The protein belongs to the globin family. Heterotetramer of two alpha chains and two beta chains. Red blood cells.

Functionally, involved in oxygen transport from the lung to the various peripheral tissues. This Rhinoceros unicornis (Greater Indian rhinoceros) protein is Hemoglobin subunit beta (HBB).